Here is a 606-residue protein sequence, read N- to C-terminus: UvrABC system protein C (606 aa).

The GIY-YIG domain maps to 19-97 (QSCGVYQMIG…IKSLKPPYNI (79 aa)). The 36-residue stretch at 207–242 (EKVKKQLSSTMEKCSKEENYELAAIYRDRLKFLEQI) folds into the UVR domain.

It belongs to the UvrC family. As to quaternary structure, interacts with UvrB in an incision complex.

The protein localises to the cytoplasm. The UvrABC repair system catalyzes the recognition and processing of DNA lesions. UvrC both incises the 5' and 3' sides of the lesion. The N-terminal half is responsible for the 3' incision and the C-terminal half is responsible for the 5' incision. The protein is UvrABC system protein C of Wolbachia sp. subsp. Brugia malayi (strain TRS).